The sequence spans 361 residues: Spermidine/putrescine import ATP-binding protein PotA (361 aa).

The ABC transporter domain occupies 4–234 (LELRDVTRRF…PANRFIADFI (231 aa)). 36–43 (GPSGCGKT) serves as a coordination point for ATP.

The protein belongs to the ABC transporter superfamily. Spermidine/putrescine importer (TC 3.A.1.11.1) family. The complex is composed of two ATP-binding proteins (PotA), two transmembrane proteins (PotB and PotC) and a solute-binding protein (PotD).

It localises to the cell inner membrane. The enzyme catalyses ATP + H2O + polyamine-[polyamine-binding protein]Side 1 = ADP + phosphate + polyamineSide 2 + [polyamine-binding protein]Side 1.. Functionally, part of the ABC transporter complex PotABCD involved in spermidine/putrescine import. Responsible for energy coupling to the transport system. The polypeptide is Spermidine/putrescine import ATP-binding protein PotA (Nitrosomonas europaea (strain ATCC 19718 / CIP 103999 / KCTC 2705 / NBRC 14298)).